The sequence spans 131 residues: Fluoride-specific ion channel FluC 2 (131 aa).

Helical transmembrane passes span 4 to 24 (IIQG…ARFW), 46 to 66 (VSGA…HGVF), 71 to 91 (PWLF…SFAL), and 105 to 125 (AISN…LGFA). G81 and T84 together coordinate Na(+).

The protein belongs to the fluoride channel Fluc/FEX (TC 1.A.43) family.

Its subcellular location is the cell inner membrane. It catalyses the reaction fluoride(in) = fluoride(out). With respect to regulation, na(+) is not transported, but it plays an essential structural role and its presence is essential for fluoride channel function. Fluoride-specific ion channel. Important for reducing fluoride concentration in the cell, thus reducing its toxicity. The chain is Fluoride-specific ion channel FluC 2 from Rhodopseudomonas palustris (strain BisB18).